The primary structure comprises 901 residues: Phosphatidylinositol 3-kinase catalytic subunit type 3 (901 aa).

Positions 21–189 constitute a C2 PI3K-type domain; it reads LQTNVQVKVA…DLLFKQVTRQ (169 aa). Residues 302–527 enclose the PIK helical domain; sequence RHRQVKPNKQ…SKMYQNIQDR (226 aa). Residues 607–886 enclose the PI3K/PI4K catalytic domain; the sequence is IPDTASFFKS…QIESSLNAKM (280 aa). The tract at residues 613-619 is G-loop; it reads FFKSEMM. The segment at 755 to 763 is catalytic loop; the sequence is GLGDRHLDN. The segment at 774-795 is activation loop; the sequence is HVDFGFILGRDPKPMPPPMKLT.

The protein belongs to the PI3/PI4-kinase family. Interacts with bec-1. May interact with dyn-1. Mn(2+) serves as cofactor. As to expression, ubiquitous.

Its subcellular location is the nucleus outer membrane. It is found in the cytoplasm. The protein localises to the cytoplasmic granule. It localises to the cell projection. The protein resides in the phagocytic cup. It catalyses the reaction a 1,2-diacyl-sn-glycero-3-phospho-(1D-myo-inositol) + ATP = a 1,2-diacyl-sn-glycero-3-phospho-(1D-myo-inositol-3-phosphate) + ADP + H(+). With respect to regulation, inhibited by wortmannin. Its function is as follows. Catalytic subunit of the PI3K complex that mediates formation of phosphatidylinositol 3-phosphate. Together with bec-1, mediates the production of phosphatidylinositol 3-phosphate on intracellular vesicles and thereby regulates membrane trafficking. Plays a role in endosome-to-Golgi retrograde transport of mig-14. Involved in clearance of apoptotic cell corpses by phagosomes. Phagosome maturation requires two sequential and non-overlapping pulses of phosphatidylinositol-3-phosphate (PI3P) on the vesicle surface which mediates recruitment of sortins snx-1 and lst-4 and small GTPases rab-5, rab-2 and rab-7, downstream of dynamin dyn-1. The first pulse is initiated by piki-1, then maintained by vps-34 which also produces the second pulse. Required for embryonic development. Together with bec-1, involved in L3/L4 larval molting stage probably by regulating cuticle shedding. Regulates the expansion of the nucleus outer membrane. Involved in the secretion and localization of lrp-1 at the apical surface of hyp7 syncytium. May regulate endocytosis in hypodermal cells. May play a role in the formation of gut granules (a lysosome-related organelle). Plays a role in germ stem cell proliferation during larval development. In Caenorhabditis elegans, this protein is Phosphatidylinositol 3-kinase catalytic subunit type 3.